We begin with the raw amino-acid sequence, 126 residues long: Ribosome-binding factor A (126 aa).

Belongs to the RbfA family. As to quaternary structure, monomer. Binds 30S ribosomal subunits, but not 50S ribosomal subunits or 70S ribosomes.

The protein resides in the cytoplasm. In terms of biological role, one of several proteins that assist in the late maturation steps of the functional core of the 30S ribosomal subunit. Associates with free 30S ribosomal subunits (but not with 30S subunits that are part of 70S ribosomes or polysomes). Required for efficient processing of 16S rRNA. May interact with the 5'-terminal helix region of 16S rRNA. The polypeptide is Ribosome-binding factor A (Thermosynechococcus vestitus (strain NIES-2133 / IAM M-273 / BP-1)).